The chain runs to 411 residues: Flavohemoprotein (411 aa).

A Globin domain is found at 5–142 (TLSQETKQIV…IADVFIQVEK (138 aa)). Histidine 89 contacts heme b. Residues tyrosine 99 and glutamate 141 each act as charge relay system in the active site. A reductase region spans residues 153 to 411 (GGWREFRSFV…FGPAGTLASS (259 aa)). One can recognise an FAD-binding FR-type domain in the interval 156–267 (REFRSFVVEK…TAPAGDFTLQ (112 aa)). Residues tyrosine 194 and 210–213 (RQYS) each bind FAD. NADP(+) is bound at residue 280–285 (GVGITP). 401–404 (FFGP) is an FAD binding site.

It belongs to the globin family. Two-domain flavohemoproteins subfamily. The protein in the C-terminal section; belongs to the flavoprotein pyridine nucleotide cytochrome reductase family. Requires heme b as cofactor. FAD is required as a cofactor.

It catalyses the reaction 2 nitric oxide + NADPH + 2 O2 = 2 nitrate + NADP(+) + H(+). The catalysed reaction is 2 nitric oxide + NADH + 2 O2 = 2 nitrate + NAD(+) + H(+). In terms of biological role, is involved in NO detoxification in an aerobic process, termed nitric oxide dioxygenase (NOD) reaction that utilizes O(2) and NAD(P)H to convert NO to nitrate, which protects the bacterium from various noxious nitrogen compounds. Therefore, plays a central role in the inducible response to nitrosative stress. This chain is Flavohemoprotein, found in Halalkalibacterium halodurans (strain ATCC BAA-125 / DSM 18197 / FERM 7344 / JCM 9153 / C-125) (Bacillus halodurans).